Consider the following 237-residue polypeptide: Thiamine-phosphate synthase (237 aa).

Residues 41–45 and Asn73 each bind 4-amino-2-methyl-5-(diphosphooxymethyl)pyrimidine; that span reads QLRDK. 2 residues coordinate Mg(2+): Asp74 and Asp93. Position 112 (Ser112) interacts with 4-amino-2-methyl-5-(diphosphooxymethyl)pyrimidine. Position 143-145 (143-145) interacts with 2-[(2R,5Z)-2-carboxy-4-methylthiazol-5(2H)-ylidene]ethyl phosphate; sequence TPT. Lys146 is a 4-amino-2-methyl-5-(diphosphooxymethyl)pyrimidine binding site. Gly192 is a binding site for 2-[(2R,5Z)-2-carboxy-4-methylthiazol-5(2H)-ylidene]ethyl phosphate.

It belongs to the thiamine-phosphate synthase family. It depends on Mg(2+) as a cofactor.

The enzyme catalyses 2-[(2R,5Z)-2-carboxy-4-methylthiazol-5(2H)-ylidene]ethyl phosphate + 4-amino-2-methyl-5-(diphosphooxymethyl)pyrimidine + 2 H(+) = thiamine phosphate + CO2 + diphosphate. It catalyses the reaction 2-(2-carboxy-4-methylthiazol-5-yl)ethyl phosphate + 4-amino-2-methyl-5-(diphosphooxymethyl)pyrimidine + 2 H(+) = thiamine phosphate + CO2 + diphosphate. It carries out the reaction 4-methyl-5-(2-phosphooxyethyl)-thiazole + 4-amino-2-methyl-5-(diphosphooxymethyl)pyrimidine + H(+) = thiamine phosphate + diphosphate. The protein operates within cofactor biosynthesis; thiamine diphosphate biosynthesis; thiamine phosphate from 4-amino-2-methyl-5-diphosphomethylpyrimidine and 4-methyl-5-(2-phosphoethyl)-thiazole: step 1/1. Its function is as follows. Condenses 4-methyl-5-(beta-hydroxyethyl)thiazole monophosphate (THZ-P) and 2-methyl-4-amino-5-hydroxymethyl pyrimidine pyrophosphate (HMP-PP) to form thiamine monophosphate (TMP). The polypeptide is Thiamine-phosphate synthase (Arthrobacter sp. (strain FB24)).